Here is a 203-residue protein sequence, read N- to C-terminus: Endo-type membrane-bound lytic murein transglycosylase A (203 aa).

Positions Met-1 to Gly-15 are cleaved as a signal peptide. Cys-16 carries the N-palmitoyl cysteine lipid modification. Residue Cys-16 is the site of S-diacylglycerol cysteine attachment.

It belongs to the transglycosylase Slt family.

It localises to the cell outer membrane. The enzyme catalyses Endolytic cleavage of the (1-&gt;4)-beta-glycosidic linkage between N-acetylmuramic acid (MurNAc) and N-acetylglucosamine (GlcNAc) residues in peptidoglycan with concomitant formation of a 1,6-anhydrobond in the MurNAc residue.. Its function is as follows. Murein-degrading enzyme. May play a role in recycling of muropeptides during cell elongation and/or cell division. Preferentially cleaves at a distance of more than two disaccharide units from the ends of the glycan chain. This is Endo-type membrane-bound lytic murein transglycosylase A from Citrobacter koseri (strain ATCC BAA-895 / CDC 4225-83 / SGSC4696).